The following is a 317-amino-acid chain: Ribosomal protein L11 methyltransferase (317 aa).

S-adenosyl-L-methionine is bound by residues Thr-162, Gly-183, Asp-205, and Asn-248.

This sequence belongs to the methyltransferase superfamily. PrmA family.

The protein resides in the cytoplasm. It carries out the reaction L-lysyl-[protein] + 3 S-adenosyl-L-methionine = N(6),N(6),N(6)-trimethyl-L-lysyl-[protein] + 3 S-adenosyl-L-homocysteine + 3 H(+). Functionally, methylates ribosomal protein L11. This Alkaliphilus metalliredigens (strain QYMF) protein is Ribosomal protein L11 methyltransferase.